A 122-amino-acid chain; its full sequence is MARIAGVNIPTNKRVLIALQYIHGIGQKNAADIIEKVKIPVDRRVNQLSDAEVLQIREVIDRDYLVEGDLRRETGMNIKRLMDLGCYRGLRHRRGLPVRGQRTHTNARTRKGPAKAIAGKKK.

Residues 99–122 (RGQRTHTNARTRKGPAKAIAGKKK) are disordered.

Belongs to the universal ribosomal protein uS13 family. As to quaternary structure, part of the 30S ribosomal subunit. Forms a loose heterodimer with protein S19. Forms two bridges to the 50S subunit in the 70S ribosome.

Located at the top of the head of the 30S subunit, it contacts several helices of the 16S rRNA. In the 70S ribosome it contacts the 23S rRNA (bridge B1a) and protein L5 of the 50S subunit (bridge B1b), connecting the 2 subunits; these bridges are implicated in subunit movement. Contacts the tRNAs in the A and P-sites. This chain is Small ribosomal subunit protein uS13, found in Rhodopseudomonas palustris (strain BisB5).